The chain runs to 441 residues: 4-hydroxy-3-methylbut-2-en-1-yl diphosphate synthase (flavodoxin) (441 aa).

[4Fe-4S] cluster-binding residues include Cys320, Cys323, Cys366, and Glu373.

The protein belongs to the IspG family. [4Fe-4S] cluster is required as a cofactor.

It catalyses the reaction (2E)-4-hydroxy-3-methylbut-2-enyl diphosphate + oxidized [flavodoxin] + H2O + 2 H(+) = 2-C-methyl-D-erythritol 2,4-cyclic diphosphate + reduced [flavodoxin]. Its pathway is isoprenoid biosynthesis; isopentenyl diphosphate biosynthesis via DXP pathway; isopentenyl diphosphate from 1-deoxy-D-xylulose 5-phosphate: step 5/6. Its function is as follows. Converts 2C-methyl-D-erythritol 2,4-cyclodiphosphate (ME-2,4cPP) into 1-hydroxy-2-methyl-2-(E)-butenyl 4-diphosphate. The chain is 4-hydroxy-3-methylbut-2-en-1-yl diphosphate synthase (flavodoxin) from Rhodopseudomonas palustris (strain ATCC BAA-98 / CGA009).